The chain runs to 246 residues: Ribosomal RNA small subunit methyltransferase J (246 aa).

S-adenosyl-L-methionine is bound by residues 115-116 (ER) and Asp-169.

This sequence belongs to the methyltransferase superfamily. RsmJ family.

It localises to the cytoplasm. The enzyme catalyses guanosine(1516) in 16S rRNA + S-adenosyl-L-methionine = N(2)-methylguanosine(1516) in 16S rRNA + S-adenosyl-L-homocysteine + H(+). Its function is as follows. Specifically methylates the guanosine in position 1516 of 16S rRNA. This Buchnera aphidicola subsp. Acyrthosiphon pisum (strain Tuc7) protein is Ribosomal RNA small subunit methyltransferase J.